The primary structure comprises 98 residues: Large ribosomal subunit protein uL23 (98 aa).

It belongs to the universal ribosomal protein uL23 family. In terms of assembly, part of the 50S ribosomal subunit. Contacts protein L29, and trigger factor when it is bound to the ribosome.

In terms of biological role, one of the early assembly proteins it binds 23S rRNA. One of the proteins that surrounds the polypeptide exit tunnel on the outside of the ribosome. Forms the main docking site for trigger factor binding to the ribosome. This Streptococcus equi subsp. equi (strain 4047) protein is Large ribosomal subunit protein uL23.